An 84-amino-acid chain; its full sequence is Exodeoxyribonuclease 7 small subunit (84 aa).

It belongs to the XseB family. As to quaternary structure, heterooligomer composed of large and small subunits.

The protein resides in the cytoplasm. It catalyses the reaction Exonucleolytic cleavage in either 5'- to 3'- or 3'- to 5'-direction to yield nucleoside 5'-phosphates.. Its function is as follows. Bidirectionally degrades single-stranded DNA into large acid-insoluble oligonucleotides, which are then degraded further into small acid-soluble oligonucleotides. The polypeptide is Exodeoxyribonuclease 7 small subunit (Azoarcus sp. (strain BH72)).